The following is a 264-amino-acid chain: Probable transcriptional regulatory protein PPA1157 (264 aa).

The protein belongs to the TACO1 family.

It is found in the cytoplasm. This chain is Probable transcriptional regulatory protein PPA1157, found in Cutibacterium acnes (strain DSM 16379 / KPA171202) (Propionibacterium acnes).